Reading from the N-terminus, the 457-residue chain is Pup--protein ligase (457 aa).

E9 lines the Mg(2+) pocket. R53 serves as a coordination point for ATP. Y55 is a binding site for Mg(2+). The Proton acceptor role is filled by D57. E63 serves as a coordination point for Mg(2+). ATP is bound by residues T66 and W424.

The protein belongs to the Pup ligase/Pup deamidase family. Pup-conjugating enzyme subfamily.

It carries out the reaction ATP + [prokaryotic ubiquitin-like protein]-L-glutamate + [protein]-L-lysine = ADP + phosphate + N(6)-([prokaryotic ubiquitin-like protein]-gamma-L-glutamyl)-[protein]-L-lysine.. Its pathway is protein degradation; proteasomal Pup-dependent pathway. It functions in the pathway protein modification; protein pupylation. Its function is as follows. Catalyzes the covalent attachment of the prokaryotic ubiquitin-like protein modifier Pup to the proteasomal substrate proteins, thereby targeting them for proteasomal degradation. This tagging system is termed pupylation. The ligation reaction involves the side-chain carboxylate of the C-terminal glutamate of Pup and the side-chain amino group of a substrate lysine. The chain is Pup--protein ligase from Xylanimonas cellulosilytica (strain DSM 15894 / JCM 12276 / CECT 5975 / KCTC 9989 / LMG 20990 / NBRC 107835 / XIL07).